A 328-amino-acid polypeptide reads, in one-letter code: Biotin synthase (328 aa).

The 220-residue stretch at 41–260 (TAIETASLLS…VALARILMPA (220 aa)) folds into the Radical SAM core domain. The [4Fe-4S] cluster site is built by C56, C60, and C63. C100, C131, C191, and R264 together coordinate [2Fe-2S] cluster.

The protein belongs to the radical SAM superfamily. Biotin synthase family. As to quaternary structure, homodimer. Requires [4Fe-4S] cluster as cofactor. The cofactor is [2Fe-2S] cluster.

The enzyme catalyses (4R,5S)-dethiobiotin + (sulfur carrier)-SH + 2 reduced [2Fe-2S]-[ferredoxin] + 2 S-adenosyl-L-methionine = (sulfur carrier)-H + biotin + 2 5'-deoxyadenosine + 2 L-methionine + 2 oxidized [2Fe-2S]-[ferredoxin]. It functions in the pathway cofactor biosynthesis; biotin biosynthesis; biotin from 7,8-diaminononanoate: step 2/2. Functionally, catalyzes the conversion of dethiobiotin (DTB) to biotin by the insertion of a sulfur atom into dethiobiotin via a radical-based mechanism. In Cereibacter sphaeroides (strain ATCC 17023 / DSM 158 / JCM 6121 / CCUG 31486 / LMG 2827 / NBRC 12203 / NCIMB 8253 / ATH 2.4.1.) (Rhodobacter sphaeroides), this protein is Biotin synthase.